The primary structure comprises 453 residues: Tubulin alpha-13 chain (453 aa).

Gln-11 serves as a coordination point for GTP. An N6-acetyllysine modification is found at Lys-40. Positions 71, 140, 144, 145, 179, 206, and 228 each coordinate GTP. Residue Glu-71 participates in Mg(2+) binding. Residue Glu-254 is part of the active site. Residues 429 to 453 (EKDYEEVGTESQEGDGEEGEDGGDQ) form a disordered region. The segment covering 431–453 (DYEEVGTESQEGDGEEGEDGGDQ) has biased composition (acidic residues).

It belongs to the tubulin family. Dimer of alpha and beta chains. A typical microtubule is a hollow water-filled tube with an outer diameter of 25 nm and an inner diameter of 15 nM. Alpha-beta heterodimers associate head-to-tail to form protofilaments running lengthwise along the microtubule wall with the beta-tubulin subunit facing the microtubule plus end conferring a structural polarity. Microtubules usually have 13 protofilaments but different protofilament numbers can be found in some organisms and specialized cells. Mg(2+) is required as a cofactor. Acetylation of alpha chains at Lys-40 stabilizes microtubules and affects affinity and processivity of microtubule motors. This modification has a role in multiple cellular functions, ranging from cell motility, cell cycle progression or cell differentiation to intracellular trafficking and signaling.

The protein resides in the cytoplasm. It is found in the cytoskeleton. It catalyses the reaction GTP + H2O = GDP + phosphate + H(+). Functionally, tubulin is the major constituent of microtubules, a cylinder consisting of laterally associated linear protofilaments composed of alpha- and beta-tubulin heterodimers. Microtubules grow by the addition of GTP-tubulin dimers to the microtubule end, where a stabilizing cap forms. Below the cap, tubulin dimers are in GDP-bound state, owing to GTPase activity of alpha-tubulin. In Naegleria pringsheimi (Amoeba), this protein is Tubulin alpha-13 chain (TUBA13).